A 250-amino-acid chain; its full sequence is uncharacterized protein (250 aa).

The signal sequence occupies residues M1–A17. Residues N48, N159, N223, and N239 are each glycosylated (N-linked (GlcNAc...) asparagine).

The protein resides in the secreted. This is an uncharacterized protein from Caenorhabditis elegans.